The primary structure comprises 154 residues: SsrA-binding protein (154 aa).

Residues Lys132–Glu154 are disordered.

The protein belongs to the SmpB family.

The protein resides in the cytoplasm. In terms of biological role, required for rescue of stalled ribosomes mediated by trans-translation. Binds to transfer-messenger RNA (tmRNA), required for stable association of tmRNA with ribosomes. tmRNA and SmpB together mimic tRNA shape, replacing the anticodon stem-loop with SmpB. tmRNA is encoded by the ssrA gene; the 2 termini fold to resemble tRNA(Ala) and it encodes a 'tag peptide', a short internal open reading frame. During trans-translation Ala-aminoacylated tmRNA acts like a tRNA, entering the A-site of stalled ribosomes, displacing the stalled mRNA. The ribosome then switches to translate the ORF on the tmRNA; the nascent peptide is terminated with the 'tag peptide' encoded by the tmRNA and targeted for degradation. The ribosome is freed to recommence translation, which seems to be the essential function of trans-translation. The protein is SsrA-binding protein of Acaryochloris marina (strain MBIC 11017).